Reading from the N-terminus, the 426-residue chain is Glutamate/glutamine/aspartate/asparagine transport system permease protein BztB (426 aa).

A run of 8 helical transmembrane segments spans residues 25–45 (SITI…WLLN), 96–116 (LLVS…IGVL), 132–152 (VETF…TILA), 211–231 (LPVS…FWGW), 252–272 (WWPS…GLGF), 293–313 (SFTA…AEIV), 340–360 (SLVI…SQFL), and 396–416 (MLLM…LMNL). The region spanning 92–414 (LLNTLLVSVL…TISLTISSLM (323 aa)) is the ABC transmembrane type-1 domain.

It belongs to the binding-protein-dependent transport system permease family. HisMQ subfamily. BztB and BztC form a heterodimer which can form a membrane complex with a homodimer of BztD.

The protein localises to the cell inner membrane. Part of a binding-protein-dependent transport system for glutamate, glutamine, aspartate and asparagine. Probably responsible for the translocation of the substrate across the membrane. The chain is Glutamate/glutamine/aspartate/asparagine transport system permease protein BztB (bztB) from Rhodobacter capsulatus (strain ATCC BAA-309 / NBRC 16581 / SB1003).